Here is a 347-residue protein sequence, read N- to C-terminus: Dual specificity mitogen-activated protein kinase kinase 3 (347 aa).

M1 is subject to N-acetylmethionine. A compositionally biased stretch (low complexity) spans 1 to 15 (MESPASSQPASMPQS). Residues 1–46 (MESPASSQPASMPQSKGKSKRKKDLRISCMSKPPAPNPTPPRNLDS) are disordered. A phosphoserine mark is found at S3 and S15. The Protein kinase domain maps to 64–325 (LVTISELGRG…YLELMEHPFF (262 aa)). ATP-binding positions include 70–78 (LGRGAYGVV) and K93. Residue D190 is the Proton acceptor of the active site. Position 218 is a phosphoserine (S218). A Phosphothreonine modification is found at T222.

Belongs to the protein kinase superfamily. STE Ser/Thr protein kinase family. MAP kinase kinase subfamily. Component of a signaling complex containing at least AKAP13, PKN1, MAPK14, ZAK and MAP2K3. Within this complex, AKAP13 interacts directly with PKN1, which in turn recruits MAPK14, MAP2K3 and ZAK. Binds to DYRK1B/MIRK and increases its kinase activity. Part of a complex with MAP3K3, RAC1 and CCM2. Interacts with ARRB1. In terms of assembly, (Microbial infection) Interacts with Yersinia YopJ. Post-translationally, autophosphorylated. Phosphorylation on Ser-218 and Thr-222 by MAP kinase kinase kinases positively regulates the kinase activity. Phosphorylated by TAOK2. In terms of processing, (Microbial infection) Yersinia YopJ may acetylate Ser/Thr residues, preventing phosphorylation and activation, thus blocking the MAPK signaling pathway. Abundant expression is seen in the skeletal muscle. It is also widely expressed in other tissues.

It carries out the reaction L-seryl-[protein] + ATP = O-phospho-L-seryl-[protein] + ADP + H(+). It catalyses the reaction L-threonyl-[protein] + ATP = O-phospho-L-threonyl-[protein] + ADP + H(+). The enzyme catalyses L-tyrosyl-[protein] + ATP = O-phospho-L-tyrosyl-[protein] + ADP + H(+). With respect to regulation, activated by dual phosphorylation on Ser-218 and Thr-222. Functionally, dual specificity kinase. Is activated by cytokines and environmental stress in vivo. Catalyzes the concomitant phosphorylation of a threonine and a tyrosine residue in the MAP kinase p38. Part of a signaling cascade that begins with the activation of the adrenergic receptor ADRA1B and leads to the activation of MAPK14. This Homo sapiens (Human) protein is Dual specificity mitogen-activated protein kinase kinase 3 (MAP2K3).